The following is a 123-amino-acid chain: Protein Rev (123 aa).

At Ser-5 the chain carries Phosphoserine; by host CK2. Residues 18–26 (IIKLLYQSS) are homomultimerization. A disordered region spans residues 25–50 (SSPCPNPRGSRQARKNRRRRWRARQR). A Nuclear localization signal and RNA-binding (RRE) motif is present at residues 34-50 (SRQARKNRRRRWRARQR). Positions 35 to 49 (RQARKNRRRRWRARQ) are enriched in basic residues. A Nuclear export signal and binding to XPO1 motif is present at residues 73–84 (LQLPPIERLRLD). The disordered stretch occupies residues 86 to 123 (SESCGTSGTQQPQGTETGVGGPQISVESSAVLGSGTKN). Residues 88-101 (SCGTSGTQQPQGTE) show a composition bias toward polar residues. Ser-92 is modified (phosphoserine; by host).

Belongs to the HIV-1 REV protein family. In terms of assembly, homomultimer; when bound to the RRE. Multimeric assembly is essential for activity and may involve XPO1. Binds to human KPNB1, XPO1, TNPO1, RANBP5 and IPO7. Interacts with the viral Integrase. Interacts with human KHDRBS1. Interacts with human NAP1; this interaction decreases Rev multimerization and stimulates its activity. Interacts with human DEAD-box helicases DDX3 and DDX24; these interactions may serve for viral RNA export to the cytoplasm and packaging, respectively. Interacts with human PSIP1; this interaction may inhibit HIV-1 DNA integration by promoting dissociation of the Integrase-LEDGF/p75 complex. Asymmetrically arginine dimethylated at one site by host PRMT6. Methylation impairs the RNA-binding activity and export of viral RNA from the nucleus to the cytoplasm. In terms of processing, phosphorylated by protein kinase CK2. Presence of, and maybe binding to the N-terminus of the regulatory beta subunit of CK2 is necessary for CK2-mediated Rev's phosphorylation.

It localises to the host nucleus. The protein resides in the host nucleolus. The protein localises to the host cytoplasm. Functionally, escorts unspliced or incompletely spliced viral pre-mRNAs (late transcripts) out of the nucleus of infected cells. These pre-mRNAs carry a recognition sequence called Rev responsive element (RRE) located in the env gene, that is not present in fully spliced viral mRNAs (early transcripts). This function is essential since most viral proteins are translated from unspliced or partially spliced pre-mRNAs which cannot exit the nucleus by the pathway used by fully processed cellular mRNAs. Rev itself is translated from a fully spliced mRNA that readily exits the nucleus. Rev's nuclear localization signal (NLS) binds directly to KPNB1/Importin beta-1 without previous binding to KPNA1/Importin alpha-1. KPNB1 binds to the GDP bound form of RAN (Ran-GDP) and targets Rev to the nucleus. In the nucleus, the conversion from Ran-GDP to Ran-GTP dissociates Rev from KPNB1 and allows Rev's binding to the RRE in viral pre-mRNAs. Rev multimerization on the RRE via cooperative assembly exposes its nuclear export signal (NES) to the surface. Rev can then form a complex with XPO1/CRM1 and Ran-GTP, leading to nuclear export of the complex. Conversion from Ran-GTP to Ran-GDP mediates dissociation of the Rev/RRE/XPO1/RAN complex, so that Rev can return to the nucleus for a subsequent round of export. Beside KPNB1, also seems to interact with TNPO1/Transportin-1, RANBP5/IPO5 and IPO7/RANBP7 for nuclear import. The nucleoporin-like HRB/RIP is an essential cofactor that probably indirectly interacts with Rev to release HIV RNAs from the perinuclear region to the cytoplasm. The sequence is that of Protein Rev from Human immunodeficiency virus type 1 group M subtype A (isolate U455) (HIV-1).